A 450-amino-acid polypeptide reads, in one-letter code: Allergen Fus c 3 (450 aa).

4 disordered regions span residues 18 to 87, 99 to 148, 185 to 377, and 398 to 426; these read EPEM…SRAQ, DLHA…HLPP, SGHP…NLVE, and QIRH…RRVS. A compositionally biased stretch (polar residues) spans 31–46; the sequence is PHQQPISSPNRTSRNT. Residues 101 to 112 are compositionally biased toward low complexity; that stretch reads HAPSHPSHLSHG. Residues 113 to 125 are compositionally biased toward basic and acidic residues; that stretch reads APHEQEHAHEIQR. Residues 272-286 are compositionally biased toward basic residues; sequence RPRKPARARRQKKEP. The segment covering 291-304 has biased composition (polar residues); that stretch reads DASQGARSSSTGGT. Residues 305 to 341 are compositionally biased toward low complexity; the sequence is AHSVSDAASPSSTSHQSRASLTSKSASMTSAASTASS. Positions 356–377 are enriched in basic and acidic residues; the sequence is TLDKPNDTAEDRRTRASHNLVE. A bHLH domain is found at 368–441; sequence RTRASHNLVE…EMARRHIEAL (74 aa).

This chain is Allergen Fus c 3, found in Fusarium culmorum.